Here is a 151-residue protein sequence, read N- to C-terminus: 6,7-dimethyl-8-ribityllumazine synthase (151 aa).

Residues phenylalanine 15, 47–49 (TFE), and 71–73 (AVI) contribute to the 5-amino-6-(D-ribitylamino)uracil site. 76 to 77 (ET) contributes to the (2S)-2-hydroxy-3-oxobutyl phosphate binding site. Histidine 79 (proton donor) is an active-site residue. A 5-amino-6-(D-ribitylamino)uracil-binding site is contributed by leucine 104. (2S)-2-hydroxy-3-oxobutyl phosphate is bound at residue arginine 119.

Belongs to the DMRL synthase family.

The enzyme catalyses (2S)-2-hydroxy-3-oxobutyl phosphate + 5-amino-6-(D-ribitylamino)uracil = 6,7-dimethyl-8-(1-D-ribityl)lumazine + phosphate + 2 H2O + H(+). It participates in cofactor biosynthesis; riboflavin biosynthesis; riboflavin from 2-hydroxy-3-oxobutyl phosphate and 5-amino-6-(D-ribitylamino)uracil: step 1/2. Its function is as follows. Catalyzes the formation of 6,7-dimethyl-8-ribityllumazine by condensation of 5-amino-6-(D-ribitylamino)uracil with 3,4-dihydroxy-2-butanone 4-phosphate. This is the penultimate step in the biosynthesis of riboflavin. The chain is 6,7-dimethyl-8-ribityllumazine synthase from Metallosphaera sedula (strain ATCC 51363 / DSM 5348 / JCM 9185 / NBRC 15509 / TH2).